The following is a 305-amino-acid chain: Axin interactor, dorsalization-associated protein B (305 aa).

Residues 126–137 (ENLEVEEEEEDG) show a composition bias toward acidic residues. Residues 126-146 (ENLEVEEEEEDGGAGAGSPDL) form a disordered region. Residues 153 to 220 (GTLLPRLPSE…RKEDTYVHFN (68 aa)) form an axin-binding region. In terms of domain architecture, C2 Aida-type spans 156 to 303 (LPRLPSEPGM…LYLHLLQTLL (148 aa)).

Belongs to the AIDA family.

Its function is as follows. Acts as a ventralizing factor during embryogenesis. Inhibits axin-mediated JNK activation by binding axin and disrupting axin homodimerization. This in turn antagonizes a Wnt/beta-catenin-independent dorsalization pathway activated by axin/JNK-signaling. This is Axin interactor, dorsalization-associated protein B (aida-b) from Xenopus laevis (African clawed frog).